The chain runs to 1218 residues: Coatomer subunit alpha-2 (1218 aa).

8 WD repeats span residues 7–48 (TKSN…DRFD), 49–88 (EHDG…CLFT), 91–132 (GHLD…AVLT), 133–172 (GHNH…KKSV), 202–241 (GHDR…AWEV), 246–285 (GHMN…GIQT), 288–326 (REHD…PAFS), and 363–404 (SLNQ…AGRA). Positions 855–876 (MANGGDGFDAEEGEANEEDGEE) are disordered. Residues 862 to 876 (FDAEEGEANEEDGEE) show a composition bias toward acidic residues.

In terms of assembly, oligomeric complex that consists of at least the alpha, beta, beta', gamma, delta, epsilon and zeta subunits.

The protein resides in the cytoplasm. It localises to the golgi apparatus membrane. Its subcellular location is the cytoplasmic vesicle. The protein localises to the COPI-coated vesicle membrane. Its function is as follows. The coatomer is a cytosolic protein complex that binds to dilysine motifs and reversibly associates with Golgi non-clathrin-coated vesicles, which further mediate biosynthetic protein transport from the ER, via the Golgi up to the trans Golgi network. Coatomer complex is required for budding from Golgi membranes, and is essential for the retrograde Golgi-to-ER transport of dilysine-tagged proteins. This chain is Coatomer subunit alpha-2, found in Oryza sativa subsp. japonica (Rice).